Consider the following 285-residue polypeptide: Bifunctional protein FolD (285 aa).

Residues 166-168 and Ile-232 contribute to the NADP(+) site; that span reads GAS.

This sequence belongs to the tetrahydrofolate dehydrogenase/cyclohydrolase family. As to quaternary structure, homodimer.

It carries out the reaction (6R)-5,10-methylene-5,6,7,8-tetrahydrofolate + NADP(+) = (6R)-5,10-methenyltetrahydrofolate + NADPH. It catalyses the reaction (6R)-5,10-methenyltetrahydrofolate + H2O = (6R)-10-formyltetrahydrofolate + H(+). The protein operates within one-carbon metabolism; tetrahydrofolate interconversion. Catalyzes the oxidation of 5,10-methylenetetrahydrofolate to 5,10-methenyltetrahydrofolate and then the hydrolysis of 5,10-methenyltetrahydrofolate to 10-formyltetrahydrofolate. The chain is Bifunctional protein FolD from Actinobacillus succinogenes (strain ATCC 55618 / DSM 22257 / CCUG 43843 / 130Z).